Reading from the N-terminus, the 320-residue chain is Ferrochelatase (320 aa).

Residues histidine 194 and glutamate 275 each contribute to the Fe cation site.

The protein belongs to the ferrochelatase family. Monomer.

The protein localises to the cytoplasm. The enzyme catalyses heme b + 2 H(+) = protoporphyrin IX + Fe(2+). It participates in porphyrin-containing compound metabolism; protoheme biosynthesis; protoheme from protoporphyrin-IX: step 1/1. Functionally, catalyzes the ferrous insertion into protoporphyrin IX. The protein is Ferrochelatase of Salmonella dublin (strain CT_02021853).